The primary structure comprises 342 residues: N-acetyl-gamma-glutamyl-phosphate reductase (342 aa).

Cys146 is a catalytic residue.

This sequence belongs to the NAGSA dehydrogenase family. Type 1 subfamily.

It is found in the cytoplasm. It carries out the reaction N-acetyl-L-glutamate 5-semialdehyde + phosphate + NADP(+) = N-acetyl-L-glutamyl 5-phosphate + NADPH + H(+). It functions in the pathway amino-acid biosynthesis; L-arginine biosynthesis; N(2)-acetyl-L-ornithine from L-glutamate: step 3/4. In terms of biological role, catalyzes the NADPH-dependent reduction of N-acetyl-5-glutamyl phosphate to yield N-acetyl-L-glutamate 5-semialdehyde. This Streptomyces avermitilis (strain ATCC 31267 / DSM 46492 / JCM 5070 / NBRC 14893 / NCIMB 12804 / NRRL 8165 / MA-4680) protein is N-acetyl-gamma-glutamyl-phosphate reductase.